The primary structure comprises 301 residues: Recombination-associated protein RdgC (301 aa).

Belongs to the RdgC family.

The protein localises to the cytoplasm. Its subcellular location is the nucleoid. Its function is as follows. May be involved in recombination. This chain is Recombination-associated protein RdgC, found in Xanthomonas oryzae pv. oryzae (strain MAFF 311018).